The primary structure comprises 183 residues: Threonylcarbamoyl-AMP synthase (183 aa).

Positions 1–183 constitute a YrdC-like domain; the sequence is MNREQIAEAL…LRTNQLFRQG (183 aa).

Belongs to the SUA5 family. TsaC subfamily.

It localises to the cytoplasm. The enzyme catalyses L-threonine + hydrogencarbonate + ATP = L-threonylcarbamoyladenylate + diphosphate + H2O. Functionally, required for the formation of a threonylcarbamoyl group on adenosine at position 37 (t(6)A37) in tRNAs that read codons beginning with adenine. Catalyzes the conversion of L-threonine, HCO(3)(-)/CO(2) and ATP to give threonylcarbamoyl-AMP (TC-AMP) as the acyladenylate intermediate, with the release of diphosphate. The protein is Threonylcarbamoyl-AMP synthase of Haemophilus influenzae (strain 86-028NP).